The sequence spans 42 residues: Small protein MntS (42 aa).

It localises to the cytoplasm. Required for repression of mntH by MntR. May function as a chaperone that makes manganese more available by delivering it to the necessary cellular locations when manganese is limiting. The polypeptide is Small protein MntS (mntS) (Escherichia coli (strain K12)).